The primary structure comprises 128 residues: Small ribosomal subunit protein uS11 (128 aa).

The protein belongs to the universal ribosomal protein uS11 family. Part of the 30S ribosomal subunit. Interacts with proteins S7 and S18. Binds to IF-3.

Located on the platform of the 30S subunit, it bridges several disparate RNA helices of the 16S rRNA. Forms part of the Shine-Dalgarno cleft in the 70S ribosome. The chain is Small ribosomal subunit protein uS11 from Vesicomyosocius okutanii subsp. Calyptogena okutanii (strain HA).